Reading from the N-terminus, the 381-residue chain is Sulfate/thiosulfate import ATP-binding protein CysA (381 aa).

The ABC transporter domain occupies 3–233; sequence ILVYEVSKSL…PIDYFVGIFS (231 aa). Residue 35–42 participates in ATP binding; sequence GPSGSGKS.

The protein belongs to the ABC transporter superfamily. Sulfate/tungstate importer (TC 3.A.1.6) family.

The protein localises to the plastid. The protein resides in the chloroplast. The enzyme catalyses sulfate(out) + ATP + H2O = sulfate(in) + ADP + phosphate + H(+). The catalysed reaction is thiosulfate(out) + ATP + H2O = thiosulfate(in) + ADP + phosphate + H(+). In terms of biological role, part of the ABC transporter complex involved in sulfate/thiosulfate import. Responsible for energy coupling to the transport system. The sequence is that of Sulfate/thiosulfate import ATP-binding protein CysA from Anthoceros angustus (Hornwort).